We begin with the raw amino-acid sequence, 333 residues long: Ornithine carbamoyltransferase (333 aa).

Carbamoyl phosphate is bound by residues 56–59 (STRT), Gln-83, Arg-107, and 134–137 (HPTQ). Residues Asn-167, Asp-231, and 235–236 (SM) contribute to the L-ornithine site. Residues 273–274 (CL) and Arg-318 contribute to the carbamoyl phosphate site.

This sequence belongs to the aspartate/ornithine carbamoyltransferase superfamily. OTCase family.

It is found in the cytoplasm. The catalysed reaction is carbamoyl phosphate + L-ornithine = L-citrulline + phosphate + H(+). It participates in amino-acid biosynthesis; L-arginine biosynthesis; L-arginine from L-ornithine and carbamoyl phosphate: step 1/3. Reversibly catalyzes the transfer of the carbamoyl group from carbamoyl phosphate (CP) to the N(epsilon) atom of ornithine (ORN) to produce L-citrulline. This chain is Ornithine carbamoyltransferase (argF), found in Staphylococcus aureus (strain Mu50 / ATCC 700699).